The sequence spans 477 residues: Trigger factor (477 aa).

A PPIase FKBP-type domain is found at Glu-169–Leu-254. A disordered region spans residues Val-435–Ala-477. The segment covering Ala-454–Lys-466 has biased composition (basic residues). Positions Lys-467–Ala-477 are enriched in basic and acidic residues.

It belongs to the FKBP-type PPIase family. Tig subfamily.

Its subcellular location is the cytoplasm. It carries out the reaction [protein]-peptidylproline (omega=180) = [protein]-peptidylproline (omega=0). In terms of biological role, involved in protein export. Acts as a chaperone by maintaining the newly synthesized protein in an open conformation. Functions as a peptidyl-prolyl cis-trans isomerase. The sequence is that of Trigger factor from Brucella suis biovar 1 (strain 1330).